The chain runs to 377 residues: Protein RecA (377 aa).

76–83 (GPESSGKT) contacts ATP.

This sequence belongs to the RecA family.

The protein resides in the cytoplasm. Functionally, can catalyze the hydrolysis of ATP in the presence of single-stranded DNA, the ATP-dependent uptake of single-stranded DNA by duplex DNA, and the ATP-dependent hybridization of homologous single-stranded DNAs. It interacts with LexA causing its activation and leading to its autocatalytic cleavage. The sequence is that of Protein RecA from Corynebacterium aurimucosum (strain ATCC 700975 / DSM 44827 / CIP 107346 / CN-1) (Corynebacterium nigricans).